An 84-amino-acid polypeptide reads, in one-letter code: Small ribosomal subunit protein uS17 (84 aa).

The protein belongs to the universal ribosomal protein uS17 family. Part of the 30S ribosomal subunit.

Its function is as follows. One of the primary rRNA binding proteins, it binds specifically to the 5'-end of 16S ribosomal RNA. The protein is Small ribosomal subunit protein uS17 of Nitrosomonas europaea (strain ATCC 19718 / CIP 103999 / KCTC 2705 / NBRC 14298).